Reading from the N-terminus, the 290-residue chain is Inositol monophosphatase 2 (290 aa).

Mg(2+)-binding residues include glutamate 83, aspartate 103, isoleucine 105, and aspartate 106. Glutamate 83 contributes to the substrate binding site. Residues 105-108 (IDGT), 207-209 (GSS), glutamine 226, and aspartate 233 each bind substrate. Residue aspartate 233 coordinates Mg(2+).

This sequence belongs to the inositol monophosphatase superfamily. Homodimer. The cofactor is Mg(2+). In terms of tissue distribution, mostly expressed in brain, small intestine, heart, kidney, and spleen (at protein level).

It is found in the cytoplasm. The enzyme catalyses a myo-inositol phosphate + H2O = myo-inositol + phosphate. It carries out the reaction 1D-myo-inositol 1-phosphate + H2O = myo-inositol + phosphate. It catalyses the reaction 1D-myo-inositol 2-phosphate + H2O = myo-inositol + phosphate. The catalysed reaction is 1D-myo-inositol 3-phosphate + H2O = myo-inositol + phosphate. The enzyme catalyses 1D-myo-inositol 4-phosphate + H2O = myo-inositol + phosphate. It carries out the reaction 1D-myo-inositol 5-phosphate + H2O = myo-inositol + phosphate. It catalyses the reaction 1D-myo-inositol 6-phosphate + H2O = myo-inositol + phosphate. The catalysed reaction is alpha-D-glucose 1-phosphate + H2O = D-glucose + phosphate. The enzyme catalyses glycerol 2-phosphate + H2O = glycerol + phosphate. It carries out the reaction adenosine 2'-phosphate + H2O = adenosine + phosphate. It participates in polyol metabolism; myo-inositol biosynthesis; myo-inositol from D-glucose 6-phosphate: step 2/2. Its function is as follows. Phosphatase that can use myo-inositol monophosphates, myo-inositol 1,4-diphosphate, scyllo-inositol-1,4-diphosphate, glucose-1-phosphate, beta-glycerophosphate and 2'-AMP as substrates in vitro. No physiological substrates has been described yet. Has been implicated as the pharmacological target for lithium Li(+) action in brain. This is Inositol monophosphatase 2 from Mus musculus (Mouse).